Reading from the N-terminus, the 579-residue chain is Tyrosine 3-monooxygenase (579 aa).

Acidic residues predominate over residues 105-114 (VEFESVEQEQ). The tract at residues 105-132 (VEFESVEQEQSESQSQEPEGNQQPTKND) is disordered. His409, His414, and Glu454 together coordinate Fe cation.

Belongs to the biopterin-dependent aromatic amino acid hydroxylase family. The cofactor is Fe(2+).

The protein localises to the cytoplasm. It localises to the perinuclear region. It is found in the cell projection. The protein resides in the axon. The catalysed reaction is (6R)-L-erythro-5,6,7,8-tetrahydrobiopterin + L-tyrosine + O2 = (4aS,6R)-4a-hydroxy-L-erythro-5,6,7,8-tetrahydrobiopterin + L-dopa. The protein operates within catecholamine biosynthesis; dopamine biosynthesis; dopamine from L-tyrosine: step 1/2. Its activity is regulated as follows. Phosphorylation leads to an increase in the catalytic activity. In terms of biological role, plays an important role in the physiology of adrenergic neurons. This chain is Tyrosine 3-monooxygenase (ple), found in Drosophila melanogaster (Fruit fly).